The following is a 78-amino-acid chain: Acyl carrier protein (78 aa).

In terms of domain architecture, Carrier spans 2–77 (SEIASRVKAI…DAVSYIEEHA (76 aa)). Ser37 bears the O-(pantetheine 4'-phosphoryl)serine mark.

It belongs to the acyl carrier protein (ACP) family. Post-translationally, 4'-phosphopantetheine is transferred from CoA to a specific serine of apo-ACP by AcpS. This modification is essential for activity because fatty acids are bound in thioester linkage to the sulfhydryl of the prosthetic group.

Its subcellular location is the cytoplasm. The protein operates within lipid metabolism; fatty acid biosynthesis. Functionally, carrier of the growing fatty acid chain in fatty acid biosynthesis. The sequence is that of Acyl carrier protein from Bacteroides thetaiotaomicron (strain ATCC 29148 / DSM 2079 / JCM 5827 / CCUG 10774 / NCTC 10582 / VPI-5482 / E50).